A 685-amino-acid polypeptide reads, in one-letter code: Glycine--tRNA ligase beta subunit (685 aa).

A disordered region spans residues 58–77 (GLTAQSPTTREERKGPRTDA). Basic and acidic residues predominate over residues 66–77 (TREERKGPRTDA).

It belongs to the class-II aminoacyl-tRNA synthetase family. In terms of assembly, tetramer of two alpha and two beta subunits.

The protein localises to the cytoplasm. The catalysed reaction is tRNA(Gly) + glycine + ATP = glycyl-tRNA(Gly) + AMP + diphosphate. In Paracoccus denitrificans (strain Pd 1222), this protein is Glycine--tRNA ligase beta subunit.